A 212-amino-acid chain; its full sequence is 2-phospho-L-lactate guanylyltransferase (212 aa).

It belongs to the CofC family. Homodimer.

The enzyme catalyses (2S)-2-phospholactate + GTP + H(+) = (2S)-lactyl-2-diphospho-5'-guanosine + diphosphate. Its pathway is cofactor biosynthesis; coenzyme F420 biosynthesis. Functionally, guanylyltransferase that catalyzes the activation of (2S)-2-phospholactate (2-PL) as (2S)-lactyl-2-diphospho-5'-guanosine, via the condensation of 2-PL with GTP. It is involved in the biosynthesis of coenzyme F420, a hydride carrier cofactor. This Methanocorpusculum labreanum (strain ATCC 43576 / DSM 4855 / Z) protein is 2-phospho-L-lactate guanylyltransferase.